The chain runs to 446 residues: ATP-dependent protease ATPase subunit HslU (446 aa).

ATP contacts are provided by residues V18, 60–65 (GVGKTE), D259, E324, and R396.

It belongs to the ClpX chaperone family. HslU subfamily. In terms of assembly, a double ring-shaped homohexamer of HslV is capped on each side by a ring-shaped HslU homohexamer. The assembly of the HslU/HslV complex is dependent on binding of ATP.

It is found in the cytoplasm. Functionally, ATPase subunit of a proteasome-like degradation complex; this subunit has chaperone activity. The binding of ATP and its subsequent hydrolysis by HslU are essential for unfolding of protein substrates subsequently hydrolyzed by HslV. HslU recognizes the N-terminal part of its protein substrates and unfolds these before they are guided to HslV for hydrolysis. This is ATP-dependent protease ATPase subunit HslU from Dechloromonas aromatica (strain RCB).